Reading from the N-terminus, the 65-residue chain is Large ribosomal subunit protein bL35 (65 aa).

Composition is skewed to basic residues over residues 1-11 and 21-43; these read MPKIKTRRSAA and KFKR…RKMR. Residues 1-65 are disordered; the sequence is MPKIKTRRSA…KAVRRMLPNG (65 aa).

Belongs to the bacterial ribosomal protein bL35 family.

The protein is Large ribosomal subunit protein bL35 of Desulfovibrio desulfuricans (strain ATCC 27774 / DSM 6949 / MB).